The sequence spans 135 residues: D-ribose pyranase (135 aa).

Residue His20 is the Proton donor of the active site. Substrate contacts are provided by residues Asp28, His102, and 124 to 126 (YSN).

Belongs to the RbsD / FucU family. RbsD subfamily. As to quaternary structure, homodecamer.

The protein localises to the cytoplasm. It catalyses the reaction beta-D-ribopyranose = beta-D-ribofuranose. Its pathway is carbohydrate metabolism; D-ribose degradation; D-ribose 5-phosphate from beta-D-ribopyranose: step 1/2. In terms of biological role, catalyzes the interconversion of beta-pyran and beta-furan forms of D-ribose. The sequence is that of D-ribose pyranase from Thermotoga maritima (strain ATCC 43589 / DSM 3109 / JCM 10099 / NBRC 100826 / MSB8).